We begin with the raw amino-acid sequence, 467 residues long: Cytochrome c-552 (467 aa).

Residues 1 to 27 (MMKKMTGKSFALSALVAASFMAAGAMA) form the signal peptide. Position 87 (His87) interacts with heme c. Heme contacts are provided by Cys115, Cys118, and Lys119. The heme c site is built by Cys153, Cys156, His157, Cys195, Cys198, and His199. The Ca(2+) site is built by Glu201, Tyr202, Lys250, and Gln252. Residue Tyr202 participates in substrate binding. His253 is a binding site for substrate. His264, Cys271, Cys274, His275, His290, Cys303, Cys306, His307, and His382 together coordinate heme c.

This sequence belongs to the cytochrome c-552 family. Ca(2+) serves as cofactor. It depends on heme c as a cofactor.

The protein localises to the periplasm. The catalysed reaction is 6 Fe(III)-[cytochrome c] + NH4(+) + 2 H2O = 6 Fe(II)-[cytochrome c] + nitrite + 8 H(+). Its pathway is nitrogen metabolism; nitrate reduction (assimilation). In terms of biological role, catalyzes the reduction of nitrite to ammonia, consuming six electrons in the process. This is Cytochrome c-552 from Shewanella sp. (strain MR-4).